We begin with the raw amino-acid sequence, 179 residues long: Large ribosomal subunit protein uL5 (179 aa).

It belongs to the universal ribosomal protein uL5 family. In terms of assembly, part of the 50S ribosomal subunit; part of the 5S rRNA/L5/L18/L25 subcomplex. Contacts the 5S rRNA and the P site tRNA. Forms a bridge to the 30S subunit in the 70S ribosome.

Functionally, this is one of the proteins that bind and probably mediate the attachment of the 5S RNA into the large ribosomal subunit, where it forms part of the central protuberance. In the 70S ribosome it contacts protein S13 of the 30S subunit (bridge B1b), connecting the 2 subunits; this bridge is implicated in subunit movement. Contacts the P site tRNA; the 5S rRNA and some of its associated proteins might help stabilize positioning of ribosome-bound tRNAs. The chain is Large ribosomal subunit protein uL5 from Nitrosospira multiformis (strain ATCC 25196 / NCIMB 11849 / C 71).